The following is a 211-amino-acid chain: ATP-dependent Clp protease proteolytic subunit (211 aa).

The active-site Nucleophile is Ser114. The active site involves His139.

Belongs to the peptidase S14 family. Fourteen ClpP subunits assemble into 2 heptameric rings which stack back to back to give a disk-like structure with a central cavity, resembling the structure of eukaryotic proteasomes.

Its subcellular location is the cytoplasm. The catalysed reaction is Hydrolysis of proteins to small peptides in the presence of ATP and magnesium. alpha-casein is the usual test substrate. In the absence of ATP, only oligopeptides shorter than five residues are hydrolyzed (such as succinyl-Leu-Tyr-|-NHMec, and Leu-Tyr-Leu-|-Tyr-Trp, in which cleavage of the -Tyr-|-Leu- and -Tyr-|-Trp bonds also occurs).. Functionally, cleaves peptides in various proteins in a process that requires ATP hydrolysis. Has a chymotrypsin-like activity. Plays a major role in the degradation of misfolded proteins. The protein is ATP-dependent Clp protease proteolytic subunit of Pseudomonas fluorescens (strain SBW25).